The sequence spans 604 residues: MSGDVEVYLSQVHDGSVSSGFRALYEERLLLDVTLLIEEHHFQAHKALLATQSDYFRVMFTADMRERDQDKIHMKGLTAAGFGHVLRFMYYGSLELSMLTVQEILQAAMYVQLTEAVEFCCSFLLAKICLENCAEVMRLLEDFSVGVEGVQEQLDAFLLENFVPLMARPDFLSYLSLEKLMAYLDSDQLSRYPEIELYEAVQAWLRHDRRRWRHTDAVVQNLRFCLMTPANIFEKVKTSEFYRYSRQLRLEVDQALSYFHQVNEQPLAETKSNRIRSVRPQTAVFRGMIGHSMVNSKILLLHRPKVWWELEGPQVPLRPDCLAIVNNFAFLLGGEELGPDGEFHASSKVYRYDPRQNSWLRMADMSVPRSEFAVGVIGKYIYAVAGRTRDETFYSTERYDIVEDKWEFVDPYPVNKYGHEGTVLNGKLYITGGITSSSTSKQVCVFDPGREGSSEHRTRRTPILTNCWENKSKMNYARCFHKMISHNGKLYVFGGVCVILRASFESQGCPSTEVYDPETDEWTILASMPIGRSGHGVAVLDKQIMVLGGLCYNGHYSDSILTFDPEENKWKEDEYPRMPCKLDGLQVCSLHFPEYVLEHVRRCS.

The BTB domain occupies 31-98; that stretch reads LDVTLLIEEH…MYYGSLELSM (68 aa). Positions 133 to 237 constitute a BACK domain; it reads CAEVMRLLED…TPANIFEKVK (105 aa). Kelch repeat units lie at residues 328-379, 381-426, 428-473, 489-542, and 544-592; these read FAFL…VIGK, IYAV…VLNG, LYIT…NKSK, KLYV…VLDK, and IMVL…SLHF.

The protein resides in the nucleus. It participates in protein modification; protein ubiquitination. Its function is as follows. Substrate-specific adapter for an E3 ubiquitin-protein ligase complex. In Danio rerio (Zebrafish), this protein is Kelch-like protein 15 (klhl15).